Reading from the N-terminus, the 363-residue chain is Zinc phosphodiesterase ELAC protein 1 (363 aa).

Zn(2+) contacts are provided by His62, His64, Asp66, His67, His182, Asp253, and His313. Catalysis depends on Asp66, which acts as the Proton acceptor.

This sequence belongs to the RNase Z family. As to quaternary structure, homodimer. Zn(2+) is required as a cofactor. As to expression, widely expressed. Expressed in heart, brain, placenta, lung, liver, skeletal muscle, kidney and pancreas.

Its subcellular location is the cytoplasm. The protein localises to the cytosol. It is found in the nucleus. It catalyses the reaction Endonucleolytic cleavage of RNA, removing extra 3' nucleotides from tRNA precursor, generating 3' termini of tRNAs. A 3'-hydroxy group is left at the tRNA terminus and a 5'-phosphoryl group is left at the trailer molecule.. In terms of biological role, zinc phosphodiesterase, which displays some tRNA 3'-processing endonuclease activity. Specifically involved in tRNA repair: acts downstream of the ribosome-associated quality control (RQC) pathway by removing a 2',3'-cyclic phosphate from tRNAs following cleavage by ANKZF1. tRNAs are then processed by TRNT1. The polypeptide is Zinc phosphodiesterase ELAC protein 1 (Homo sapiens (Human)).